The following is a 207-amino-acid chain: LexA repressor (207 aa).

The H-T-H motif DNA-binding region spans 28–48; that stretch reads VREIGEAVGLASSSTVHGHLS. Residues S130 and K168 each act as for autocatalytic cleavage activity in the active site.

This sequence belongs to the peptidase S24 family. As to quaternary structure, homodimer.

It catalyses the reaction Hydrolysis of Ala-|-Gly bond in repressor LexA.. Functionally, represses a number of genes involved in the response to DNA damage (SOS response), including recA and lexA. In the presence of single-stranded DNA, RecA interacts with LexA causing an autocatalytic cleavage which disrupts the DNA-binding part of LexA, leading to derepression of the SOS regulon and eventually DNA repair. The chain is LexA repressor from Staphylococcus aureus (strain Mu3 / ATCC 700698).